The chain runs to 502 residues: Glycerol kinase (502 aa).

T14 is an ADP binding site. ATP is bound by residues T14, T15, and S16. T14 is a binding site for sn-glycerol 3-phosphate. R18 serves as a coordination point for ADP. Sn-glycerol 3-phosphate is bound by residues R84, E85, Y136, and D246. Positions 84, 85, 136, 246, and 247 each coordinate glycerol. ADP is bound by residues T268 and G311. Residues T268, G311, Q315, and G412 each contribute to the ATP site. 2 residues coordinate ADP: G412 and N416.

This sequence belongs to the FGGY kinase family. As to quaternary structure, homotetramer and homodimer (in equilibrium). Heterodimer with EIIA-Glc. Binds 1 zinc ion per glycerol kinase EIIA-Glc dimer. The zinc ion is important for dimerization.

The enzyme catalyses glycerol + ATP = sn-glycerol 3-phosphate + ADP + H(+). It functions in the pathway polyol metabolism; glycerol degradation via glycerol kinase pathway; sn-glycerol 3-phosphate from glycerol: step 1/1. With respect to regulation, activity of this regulatory enzyme is affected by several metabolites. Allosterically and non-competitively inhibited by fructose 1,6-bisphosphate (FBP) and unphosphorylated phosphocarrier protein EIIA-Glc (III-Glc), an integral component of the bacterial phosphotransferase (PTS) system. Functionally, key enzyme in the regulation of glycerol uptake and metabolism. Catalyzes the phosphorylation of glycerol to yield sn-glycerol 3-phosphate. This chain is Glycerol kinase, found in Salmonella heidelberg (strain SL476).